Consider the following 192-residue polypeptide: MADNYTPRMKKLYDDKIVKAMTDKFGYKNAMEVPKIEKITLNMGVGEATQDKKKVEAAAAEMELIAGQKPVVTKAKKSIAQFKLREGMPIGCKVTLRRERMYEFLDRLITIAMPRIRDFRGVSAKSFDGRGNYAMGLKEQIIFPEINYDRIDQVRGMDVIVTTTARTDEEARELLRLFGFPFPIEAQEKEAA.

This sequence belongs to the universal ribosomal protein uL5 family. As to quaternary structure, part of the 50S ribosomal subunit; part of the 5S rRNA/L5/L18/L25 subcomplex. Contacts the 5S rRNA and the P site tRNA. Forms a bridge to the 30S subunit in the 70S ribosome.

Functionally, this is one of the proteins that bind and probably mediate the attachment of the 5S RNA into the large ribosomal subunit, where it forms part of the central protuberance. In the 70S ribosome it contacts protein S13 of the 30S subunit (bridge B1b), connecting the 2 subunits; this bridge is implicated in subunit movement. Contacts the P site tRNA; the 5S rRNA and some of its associated proteins might help stabilize positioning of ribosome-bound tRNAs. The chain is Large ribosomal subunit protein uL5 from Sphingopyxis alaskensis (strain DSM 13593 / LMG 18877 / RB2256) (Sphingomonas alaskensis).